The chain runs to 260 residues: uncharacterized protein (260 aa).

The first 22 residues, 1–22 (MKHSKKLLLCISFLLITIFISG), serve as a signal peptide directing secretion. Cysteine 23 is lipidated: N-palmitoyl cysteine. Cysteine 23 carries the S-diacylglycerol cysteine lipid modification.

This sequence belongs to the staphylococcal tandem lipoprotein family.

Its subcellular location is the cell membrane. This is an uncharacterized protein from Staphylococcus epidermidis (strain ATCC 35984 / DSM 28319 / BCRC 17069 / CCUG 31568 / BM 3577 / RP62A).